We begin with the raw amino-acid sequence, 561 residues long: Thymidine kinase (561 aa).

Composition is skewed to polar residues over residues 1 to 14 (MASNSHNNYNTPRR) and 112 to 122 (LSSSNTASGLR). Disordered regions lie at residues 1-22 (MASNSHNNYNTPRRQNYDVPKA) and 34-122 (FLTQ…SGLR). An ATP-binding site is contributed by 245–252 (GCMAAGKT). Glu272 acts as the Proton acceptor in catalysis. Residue Gln310 participates in substrate binding. Arg400 is a binding site for ATP. Arg406 contributes to the substrate binding site.

This sequence belongs to the herpesviridae thymidine kinase family. As to quaternary structure, homodimer.

The enzyme catalyses thymidine + ATP = dTMP + ADP + H(+). Functionally, catalyzes the transfer of the gamma-phospho group of ATP to thymidine to generate dTMP in the salvage pathway of pyrimidine synthesis. The dTMP serves as a substrate for DNA polymerase during viral DNA replication. Allows the virus to be reactivated and to grow in non-proliferative cells lacking a high concentration of phosphorylated nucleic acid precursors. The polypeptide is Thymidine kinase (Connochaetes taurinus (Blue wildebeest)).